The primary structure comprises 316 residues: 4-hydroxy-3-methylbut-2-enyl diphosphate reductase (316 aa).

Position 12 (cysteine 12) interacts with [4Fe-4S] cluster. Positions 41 and 74 each coordinate (2E)-4-hydroxy-3-methylbut-2-enyl diphosphate. Dimethylallyl diphosphate-binding residues include histidine 41 and histidine 74. Residues histidine 41 and histidine 74 each coordinate isopentenyl diphosphate. Residue cysteine 96 participates in [4Fe-4S] cluster binding. (2E)-4-hydroxy-3-methylbut-2-enyl diphosphate is bound at residue histidine 124. Residue histidine 124 participates in dimethylallyl diphosphate binding. Histidine 124 provides a ligand contact to isopentenyl diphosphate. The active-site Proton donor is glutamate 126. Position 169 (threonine 169) interacts with (2E)-4-hydroxy-3-methylbut-2-enyl diphosphate. Cysteine 199 serves as a coordination point for [4Fe-4S] cluster. Residues serine 227, serine 228, asparagine 229, and serine 271 each coordinate (2E)-4-hydroxy-3-methylbut-2-enyl diphosphate. Dimethylallyl diphosphate contacts are provided by serine 227, serine 228, asparagine 229, and serine 271. 4 residues coordinate isopentenyl diphosphate: serine 227, serine 228, asparagine 229, and serine 271.

Belongs to the IspH family. It depends on [4Fe-4S] cluster as a cofactor.

It catalyses the reaction isopentenyl diphosphate + 2 oxidized [2Fe-2S]-[ferredoxin] + H2O = (2E)-4-hydroxy-3-methylbut-2-enyl diphosphate + 2 reduced [2Fe-2S]-[ferredoxin] + 2 H(+). It carries out the reaction dimethylallyl diphosphate + 2 oxidized [2Fe-2S]-[ferredoxin] + H2O = (2E)-4-hydroxy-3-methylbut-2-enyl diphosphate + 2 reduced [2Fe-2S]-[ferredoxin] + 2 H(+). It participates in isoprenoid biosynthesis; dimethylallyl diphosphate biosynthesis; dimethylallyl diphosphate from (2E)-4-hydroxy-3-methylbutenyl diphosphate: step 1/1. Its pathway is isoprenoid biosynthesis; isopentenyl diphosphate biosynthesis via DXP pathway; isopentenyl diphosphate from 1-deoxy-D-xylulose 5-phosphate: step 6/6. Catalyzes the conversion of 1-hydroxy-2-methyl-2-(E)-butenyl 4-diphosphate (HMBPP) into a mixture of isopentenyl diphosphate (IPP) and dimethylallyl diphosphate (DMAPP). Acts in the terminal step of the DOXP/MEP pathway for isoprenoid precursor biosynthesis. In Xanthomonas oryzae pv. oryzae (strain MAFF 311018), this protein is 4-hydroxy-3-methylbut-2-enyl diphosphate reductase.